The chain runs to 247 residues: Cell division protein ZapD (247 aa).

Belongs to the ZapD family. As to quaternary structure, interacts with FtsZ.

It localises to the cytoplasm. Its function is as follows. Cell division factor that enhances FtsZ-ring assembly. Directly interacts with FtsZ and promotes bundling of FtsZ protofilaments, with a reduction in FtsZ GTPase activity. The sequence is that of Cell division protein ZapD from Shigella boydii serotype 18 (strain CDC 3083-94 / BS512).